A 345-amino-acid chain; its full sequence is GTPase Obg (345 aa).

One can recognise an Obg domain in the interval 1-159; that stretch reads MKFIDEAIIK…RTLRLELKLL (159 aa). Positions 127–148 are disordered; that stretch reads NARFKSSTNRAPRKTTQGKPGE. The span at 130–144 shows a compositional bias: polar residues; it reads FKSSTNRAPRKTTQG. The 175-residue stretch at 160 to 334 folds into the OBG-type G domain; sequence ADVGLLGLPN…LIHAVMQYLE (175 aa). Residues 166 to 173, 191 to 195, 213 to 216, 284 to 287, and 315 to 317 each bind GTP; these read GLPNAGKS, FTTLH, DIPG, NKTD, and SAL. Ser-173 and Thr-193 together coordinate Mg(2+).

The protein belongs to the TRAFAC class OBG-HflX-like GTPase superfamily. OBG GTPase family. In terms of assembly, monomer. It depends on Mg(2+) as a cofactor.

The protein resides in the cytoplasm. An essential GTPase which binds GTP, GDP and possibly (p)ppGpp with moderate affinity, with high nucleotide exchange rates and a fairly low GTP hydrolysis rate. Plays a role in control of the cell cycle, stress response, ribosome biogenesis and in those bacteria that undergo differentiation, in morphogenesis control. The chain is GTPase Obg from Nitrosococcus oceani (strain ATCC 19707 / BCRC 17464 / JCM 30415 / NCIMB 11848 / C-107).